The primary structure comprises 197 residues: Probable adenylyl-sulfate kinase (197 aa).

33–40 (GLSGSGKS) is an ATP binding site. Residue Ser-107 is the Phosphoserine intermediate of the active site.

The protein belongs to the APS kinase family.

The enzyme catalyses adenosine 5'-phosphosulfate + ATP = 3'-phosphoadenylyl sulfate + ADP + H(+). It participates in sulfur metabolism; hydrogen sulfide biosynthesis; sulfite from sulfate: step 2/3. Catalyzes the synthesis of activated sulfate. This chain is Probable adenylyl-sulfate kinase (cysC), found in Bacillus subtilis (strain 168).